Here is a 138-residue protein sequence, read N- to C-terminus: ATP synthase epsilon chain (138 aa).

Belongs to the ATPase epsilon chain family. In terms of assembly, F-type ATPases have 2 components, CF(1) - the catalytic core - and CF(0) - the membrane proton channel. CF(1) has five subunits: alpha(3), beta(3), gamma(1), delta(1), epsilon(1). CF(0) has three main subunits: a, b and c.

The protein resides in the cell membrane. Functionally, produces ATP from ADP in the presence of a proton gradient across the membrane. The protein is ATP synthase epsilon chain of Streptococcus equi subsp. zooepidemicus (strain H70).